The following is a 545-amino-acid chain: 1,3-beta-glucanosyltransferase ARB_07487 (545 aa).

A signal peptide spans 1–19 (MKFSSLAAATALVAGSVVA). N-linked (GlcNAc...) asparagine glycans are attached at residues N51 and N69. C88 and C117 are oxidised to a cystine. (1,3-beta-D-glucosyl)n-binding positions include Y106, 133–141 (SEPSTSIIR), N174, and E175. The active-site Proton donor is E175. N179 carries N-linked (GlcNAc...) asparagine glycosylation. D216 and R221 together coordinate (1,3-beta-D-glucosyl)n. Cystine bridges form between C230/C363, C248/C279, C384/C437, C393/C464, and C412/C419. E276 (nucleophile) is an active-site residue. Y308 contributes to the (1,3-beta-D-glucosyl)n binding site. The segment at 493–513 (GTGSVTSAPGSGGNKPDQGAA) is disordered. A512 is lipidated: GPI-anchor amidated alanine. A propeptide spans 513 to 545 (ASTISAPSVNLGIVKLGAYIFCAVLAGAGMILI) (removed in mature form).

Belongs to the glycosyl hydrolase 72 family. The GPI-anchor is attached to the protein in the endoplasmic reticulum and serves to target the protein to the cell surface. There, the glucosamine-inositol phospholipid moiety is cleaved off and the GPI-modified mannoprotein is covalently attached via its lipidless GPI glycan remnant to the 1,6-beta-glucan of the outer cell wall layer.

It is found in the secreted. The protein resides in the cell membrane. The protein localises to the cell wall. Splits internally a 1,3-beta-glucan molecule and transfers the newly generated reducing end (the donor) to the non-reducing end of another 1,3-beta-glucan molecule (the acceptor) forming a 1,3-beta linkage, resulting in the elongation of 1,3-beta-glucan chains in the cell wall. Involved in cell wall biosynthesis and morphogenesis. This chain is 1,3-beta-glucanosyltransferase ARB_07487, found in Arthroderma benhamiae (strain ATCC MYA-4681 / CBS 112371) (Trichophyton mentagrophytes).